The chain runs to 490 residues: MQPAMMMFSSKYWARRGFSLDSAVPEEHQLLGNLTLNKANSGKNDDKGNKGSSKNETATESGKTAVVFSLKNEVGGLVKALRLFQEKRVHMVHIESRKSRRRSSEVEIFVDCECGKTEFNELIQLLKFQTTIVTLNPPENIWTEEEELEDVPWFPRKISELDKCSHRVLMYGSELDADHPGFKDNVYRQRRKYFVDVAMGYKYGQPIPRVEYTEEETKTWGVVFRELSKLYPTHACREYLKNFPLLTKYCGYREDNVPQLEDVSMFLKERSGFTVRPVAGYLSPRDFLAGLAYRVFHCTQYIRHGSDPLYTPEPDTCHELLGHVPLLADPKFAQFSQEIGLASLGASDEDVQKLATCYFFTIEFGLCKQEGQLRAYGAGLLSSIGELKHALSDKACVKAFDPKTTCLQECLITTFQEAYFVSESFEEAKEKMRDFAKSITRPFSVYFNPYTQSIEILKDTRSIENVVQDLRSDLNTVCDALNKMNQYLGI.

A Phosphoserine modification is found at serine 19. The tract at residues 34–62 (LTLNKANSGKNDDKGNKGSSKNETATESG) is disordered. The segment covering 50–62 (KGSSKNETATESG) has biased composition (polar residues). Positions 65–140 (AVVFSLKNEV…TIVTLNPPEN (76 aa)) constitute an ACT domain. Histidine 318, histidine 323, and glutamate 363 together coordinate Fe cation.

Belongs to the biopterin-dependent aromatic amino acid hydroxylase family. Interacts with DNAJC12. It depends on Fe(2+) as a cofactor.

It carries out the reaction (6R)-L-erythro-5,6,7,8-tetrahydrobiopterin + L-tryptophan + O2 = 5-hydroxy-L-tryptophan + (4aS,6R)-4a-hydroxy-L-erythro-5,6,7,8-tetrahydrobiopterin. The protein operates within aromatic compound metabolism; serotonin biosynthesis; serotonin from L-tryptophan: step 1/2. The polypeptide is Tryptophan 5-hydroxylase 2 (TPH2) (Macaca mulatta (Rhesus macaque)).